The following is a 99-amino-acid chain: Large ribosomal subunit protein uL23 (99 aa).

The protein belongs to the universal ribosomal protein uL23 family. In terms of assembly, part of the 50S ribosomal subunit. Contacts protein L29, and trigger factor when it is bound to the ribosome.

Its function is as follows. One of the early assembly proteins it binds 23S rRNA. One of the proteins that surrounds the polypeptide exit tunnel on the outside of the ribosome. Forms the main docking site for trigger factor binding to the ribosome. This chain is Large ribosomal subunit protein uL23, found in Stutzerimonas stutzeri (strain A1501) (Pseudomonas stutzeri).